A 545-amino-acid chain; its full sequence is Ribosomal protein uS12 methylthiotransferase RimO (545 aa).

Positions 7–129 (RRVALVTLGC…IGEHLDAVLG (123 aa)) constitute an MTTase N-terminal domain. Positions 16, 52, 92, 197, 201, and 204 each coordinate [4Fe-4S] cluster. Positions 183–414 (LTAGPVAALK…DLVEQLTATR (232 aa)) constitute a Radical SAM core domain. In terms of domain architecture, TRAM spans 416 to 510 (QERIGSRVQV…GVDLVAEFTA (95 aa)). Disordered regions lie at residues 454–486 (LPGP…QPGV) and 516–545 (RPSA…ADGT). Residues 455-464 (PGPAGAAAGP) are compositionally biased toward low complexity.

This sequence belongs to the methylthiotransferase family. RimO subfamily. [4Fe-4S] cluster serves as cofactor.

The protein resides in the cytoplasm. The catalysed reaction is L-aspartate(89)-[ribosomal protein uS12]-hydrogen + (sulfur carrier)-SH + AH2 + 2 S-adenosyl-L-methionine = 3-methylsulfanyl-L-aspartate(89)-[ribosomal protein uS12]-hydrogen + (sulfur carrier)-H + 5'-deoxyadenosine + L-methionine + A + S-adenosyl-L-homocysteine + 2 H(+). Its function is as follows. Catalyzes the methylthiolation of an aspartic acid residue of ribosomal protein uS12. This is Ribosomal protein uS12 methylthiotransferase RimO from Frankia alni (strain DSM 45986 / CECT 9034 / ACN14a).